An 851-amino-acid chain; its full sequence is MPSSNSGNELLLRFFESAHFTSQLCVAYLSRYPNNIGIHHFLCEKLATFPYEEIEFFIPQLIHLVLNKDSESVALEEFIISQCEQNTQCALITFWYLQAHMVDLGLQPHSSCFKICKRLYNRIQILVFMSSSSLIQSQQKISENVTPALILSGIMLGGVCVPELLKKAGPIAIAQGRKAPRQDPDESDVDVLRRLSTEPRYSLDVLRSSLNNSIVEQHSEVSLRLKAPELTRTHSYQSSATLSIDEQRRVLRSNYFQQEIQFLFALQDISIRLIIVPRQARLSSLRAELALLNNNLPADVNIPLLRSYHKEVSHKIVRIDPKEATILNSAERVPYLIMVEVLSGELSFEPQSKKNKAKVQKIVSHKNQRKRWFDLTDVDPYTNLQDSTDNDISESESEGGDLSMSPLIKGLVPDTLSLSKSFSSFGNVSLQVPSSHRDTDVVLLSGRHSDSDGNGALKRSKIYASEITARMRAAATMLSQLDAEGSRRPKAETERIKNSIILDMQRLEEERLNEPSIYPVSVDISCAEDLRFGKETQKAERKGDRDDPSAATFQEDWYAKKERIRKSSPYGHYPNWDLVSVIVKTGADLRQETFACQLIYAFQRVWLECKEKVWVRRMKILVTGDNSGLIETITNAISVHSIKKNLTKQLREAELAQGKIAGKNVVTLKDYFIKQFGDPNSSRYRQAQTNFLQSLVAYSIISYLLQLKDRHNGNVLIDSEGHIIHIDFGFLLTNTPGNVGFESAPFKLTADYLEILDDRFDEYRSLMKAAFKSVRKNADQIILLVEVMQNNSTMPCFRAGENTSAQLLQRFQLQLGDKECDDFVDLLIQKANCSVWTRLYDLFQNITNGIY.

Positions 1 to 123 constitute a PIK helical domain; it reads MPSSNSGNEL…KICKRLYNRI (123 aa). A phosphoserine mark is found at serine 202, serine 219, serine 222, and serine 235. Tyrosine 236 is subject to Phosphotyrosine. The tract at residues 384-404 is disordered; that stretch reads LQDSTDNDISESESEGGDLSM. A compositionally biased stretch (acidic residues) spans 388-399; sequence TDNDISESESEG. In terms of domain architecture, PI3K/PI4K catalytic spans 558–836; sequence YAKKERIRKS…LIQKANCSVW (279 aa). Residues 564–570 form a G-loop region; sequence IRKSSPY. A catalytic loop region spans residues 706 to 714; sequence QLKDRHNGN. Residues 725–749 form an activation loop region; the sequence is HIDFGFLLTNTPGNVGFESAPFKLT.

It belongs to the PI3/PI4-kinase family. In terms of assembly, interacts with cdc4 and cam2.

It localises to the golgi apparatus. It is found in the nucleus. It catalyses the reaction a 1,2-diacyl-sn-glycero-3-phospho-(1D-myo-inositol) + ATP = a 1,2-diacyl-sn-glycero-3-phospho-(1D-myo-inositol 4-phosphate) + ADP + H(+). Functionally, acts on phosphatidylinositol (PI) in the first committed step in the production of the second messenger inositol 1,4,5,-trisphosphate. PIK1 is part of a nuclear phosphoinositide cycle and could control cytokinesis through the actin cytoskeleton. The polypeptide is Phosphatidylinositol 4-kinase pik1 (pik1) (Schizosaccharomyces pombe (strain 972 / ATCC 24843) (Fission yeast)).